Reading from the N-terminus, the 62-residue chain is Small ribosomal subunit protein uS14 (62 aa).

4 residues coordinate Zn(2+): cysteine 25, cysteine 28, cysteine 41, and cysteine 44.

Belongs to the universal ribosomal protein uS14 family. Zinc-binding uS14 subfamily. As to quaternary structure, part of the 30S ribosomal subunit. Contacts proteins S3 and S10. Zn(2+) serves as cofactor.

In terms of biological role, binds 16S rRNA, required for the assembly of 30S particles and may also be responsible for determining the conformation of the 16S rRNA at the A site. In Persephonella marina (strain DSM 14350 / EX-H1), this protein is Small ribosomal subunit protein uS14.